The sequence spans 287 residues: Pyridoxal kinase PdxY (287 aa).

Substrate-binding positions include serine 9 and 44-45 (TQ). Residues aspartate 111, glutamate 147, and lysine 180 each coordinate ATP. Aspartate 221 is a substrate binding site.

This sequence belongs to the pyridoxine kinase family. PdxY subfamily. As to quaternary structure, homodimer. Requires Mg(2+) as cofactor.

The catalysed reaction is pyridoxal + ATP = pyridoxal 5'-phosphate + ADP + H(+). The protein operates within cofactor metabolism; pyridoxal 5'-phosphate salvage; pyridoxal 5'-phosphate from pyridoxal: step 1/1. Pyridoxal kinase involved in the salvage pathway of pyridoxal 5'-phosphate (PLP). Catalyzes the phosphorylation of pyridoxal to PLP. The protein is Pyridoxal kinase PdxY of Paraburkholderia phymatum (strain DSM 17167 / CIP 108236 / LMG 21445 / STM815) (Burkholderia phymatum).